The chain runs to 662 residues: Interleukin-12 receptor subunit beta-1 (662 aa).

Residues 1–23 (MEPLVTWVVPLLFLFLLSRQGAA) form the signal peptide. Topologically, residues 24-545 (CRTSECCFQD…RFSIEVQVSD (522 aa)) are extracellular. 5 consecutive Fibronectin type-III domains span residues 46–136 (GPRD…LYNS), 142–234 (PLGD…VPPE), 237–337 (PQPQ…IPAD), 338–444 (THTE…GNAS), and 448–542 (TPHH…IEVQ). An intrachain disulfide couples Cys52 to Cys62. Residue Asn121 is glycosylated (N-linked (GlcNAc...) asparagine). A WSXWS motif motif is present at residues 222–226 (WSKWS). 5 N-linked (GlcNAc...) asparagine glycosylation sites follow: Asn329, Asn346, Asn352, Asn442, and Asn456. Residues 546–570 (WLIFFASLGSFLSILLVGVLGYLGL) form a helical membrane-spanning segment. At 571-662 (NRAARHLCPP…EDGDRCKAKM (92 aa)) the chain is on the cytoplasmic side. A Box 1 motif motif is present at residues 577 to 585 (LCPPLPTPC). Residues 626 to 637 (GERTEPLEKTEL) are compositionally biased toward basic and acidic residues. The interval 626 to 648 (GERTEPLEKTELPEGAPELALDT) is disordered.

Belongs to the type I cytokine receptor family. Type 2 subfamily. As to quaternary structure, dimer or oligomer; disulfide-linked. Interacts with IL12RB2 to form the high affinity IL12 receptor. Heterodimer with IL23R; in presence of IL23. The heterodimer forms the IL23 receptor.

The protein resides in the membrane. Its function is as follows. Functions as an interleukin receptor which binds interleukin-12 with low affinity and is involved in IL12 transduction. Associated with IL12RB2 it forms a functional, high affinity receptor for IL12. Also associates with IL23R to form the interleukin-23 receptor which functions in IL23 signal transduction probably through activation of the Jak-Stat signaling cascade. The polypeptide is Interleukin-12 receptor subunit beta-1 (IL12RB1) (Homo sapiens (Human)).